Reading from the N-terminus, the 90-residue chain is Acylphosphatase (90 aa).

One can recognise an Acylphosphatase-like domain in the interval 4–90; sequence RWRFLIEGSV…TGNDWFDVRT (87 aa). Active-site residues include R19 and N37.

It belongs to the acylphosphatase family.

The catalysed reaction is an acyl phosphate + H2O = a carboxylate + phosphate + H(+). In Synechococcus sp. (strain CC9311), this protein is Acylphosphatase (acyP).